The sequence spans 1536 residues: Glycogen debranching enzyme (1536 aa).

Catalysis depends on residues Asp-535, His-538, and Asp-670.

It belongs to the glycogen debranching enzyme family. Interacts with IGD1.

The protein localises to the mitochondrion. Its subcellular location is the cytoplasm. It carries out the reaction Transfers a segment of a (1-&gt;4)-alpha-D-glucan to a new position in an acceptor, which may be glucose or a (1-&gt;4)-alpha-D-glucan.. The enzyme catalyses Hydrolysis of (1-&gt;6)-alpha-D-glucosidic branch linkages in glycogen phosphorylase limit dextrin.. Its activity is regulated as follows. Activity is inhibited by IGD1. Functionally, multifunctional enzyme acting as 1,4-alpha-D-glucan:1,4-alpha-D-glucan 4-alpha-D-glycosyltransferase and amylo-1,6-glucosidase in glycogen degradation. The protein is Glycogen debranching enzyme (GDB1) of Saccharomyces cerevisiae (strain ATCC 204508 / S288c) (Baker's yeast).